The following is a 320-amino-acid chain: o-succinylbenzoate synthase (320 aa).

The active-site Proton donor is Lys133. Mg(2+) is bound by residues Asp161, Glu190, and Asp213. The Proton acceptor role is filled by Lys235.

The protein belongs to the mandelate racemase/muconate lactonizing enzyme family. MenC type 1 subfamily. The cofactor is a divalent metal cation.

It carries out the reaction (1R,6R)-6-hydroxy-2-succinyl-cyclohexa-2,4-diene-1-carboxylate = 2-succinylbenzoate + H2O. The protein operates within quinol/quinone metabolism; 1,4-dihydroxy-2-naphthoate biosynthesis; 1,4-dihydroxy-2-naphthoate from chorismate: step 4/7. Its pathway is quinol/quinone metabolism; menaquinone biosynthesis. Its function is as follows. Converts 2-succinyl-6-hydroxy-2,4-cyclohexadiene-1-carboxylate (SHCHC) to 2-succinylbenzoate (OSB). The chain is o-succinylbenzoate synthase from Salmonella enteritidis PT4 (strain P125109).